The primary structure comprises 1235 residues: ATP-dependent helicase/nuclease subunit A (1235 aa).

One can recognise a UvrD-like helicase ATP-binding domain in the interval 12–482 (SLWTDDQWKA…IDLSQNFRSR (471 aa)). 33–40 (AAAGSGKT) contributes to the ATP binding site. One can recognise a UvrD-like helicase C-terminal domain in the interval 509-800 (AAELTLGAKS…RMMTIHASKG (292 aa)).

This sequence belongs to the helicase family. AddA subfamily. In terms of assembly, heterodimer of AddA and AddB/RexB. Mg(2+) is required as a cofactor.

It carries out the reaction Couples ATP hydrolysis with the unwinding of duplex DNA by translocating in the 3'-5' direction.. The enzyme catalyses ATP + H2O = ADP + phosphate + H(+). Functionally, the heterodimer acts as both an ATP-dependent DNA helicase and an ATP-dependent, dual-direction single-stranded exonuclease. Recognizes the chi site generating a DNA molecule suitable for the initiation of homologous recombination. The AddA nuclease domain is required for chi fragment generation; this subunit has the helicase and 3' -&gt; 5' nuclease activities. This is ATP-dependent helicase/nuclease subunit A from Listeria monocytogenes serotype 4a (strain HCC23).